Reading from the N-terminus, the 310-residue chain is MRRAALWLWLCALALSLQPALPQIVATNLPPEDQDGSGDDSDNFSGSGAGALQDITLSQQTPSTWKDTQLLTAIPTSPEPTGLEATAASTSTLPAGEGPKEGEAVVLPEVEPGLTAREQEATPRPRETTQLPTTHLASTTTATTAQEPATSHPHRDMQPGHHETSTPAGPSQADLHTPHTEDGGPSATERAAEDGASSQLPAAEGSGEQDFTFETSGENTAVVAVEPDRRNQSPVDQGATGASQGLLDRKEVLGGVIAGGLVGLIFAVCLVGFMLYRMKKKDEGSYSLEEPKQANGGAYQKPTKQEEFYA.

A signal peptide spans 1-22; it reads MRRAALWLWLCALALSLQPALP. The Extracellular segment spans residues 23–254; it reads QIVATNLPPE…GLLDRKEVLG (232 aa). Disordered regions lie at residues 27–100 and 114–212; these read TNLP…EGPK and LTAR…QDFT. Residues 32–42 show a composition bias toward acidic residues; the sequence is EDQDGSGDDSD. The O-linked (Xyl...) (chondroitin sulfate) serine glycan is linked to Ser37. The N-linked (GlcNAc...) asparagine glycan is linked to Asn43. 2 O-linked (Xyl...) (heparan sulfate) serine glycosylation sites follow: Ser45 and Ser47. Positions 55–75 are enriched in polar residues; it reads ITLSQQTPSTWKDTQLLTAIP. Positions 117-127 are enriched in basic and acidic residues; sequence REQEATPRPRE. Low complexity predominate over residues 128 to 151; sequence TTQLPTTHLASTTTATTAQEPATS. Residues 153-164 are compositionally biased toward basic and acidic residues; that stretch reads PHRDMQPGHHET. O-linked (Xyl...) (chondroitin sulfate) serine glycans are attached at residues Ser206 and Ser216. The chain crosses the membrane as a helical span at residues 255–275; that stretch reads GVIAGGLVGLIFAVCLVGFML. Over 276–310 the chain is Cytoplasmic; that stretch reads YRMKKKDEGSYSLEEPKQANGGAYQKPTKQEEFYA. The segment at 284-310 is disordered; it reads GSYSLEEPKQANGGAYQKPTKQEEFYA. A Phosphoserine modification is found at Ser285.

Belongs to the syndecan proteoglycan family. As to quaternary structure, interacts with CDCP1. Interacts (via C-terminus) with TIAM1 (via PDZ domain). Interacts with MDK. Shedding is enhanced by a number of factors such as heparanase, thrombin or EGF. Also by stress and wound healing. PMA-mediated shedding is inhibited by TIMP3. As to expression, detected in placenta (at protein level). Detected in fibroblasts (at protein level).

It is found in the membrane. The protein resides in the secreted. The protein localises to the extracellular exosome. Cell surface proteoglycan that contains both heparan sulfate and chondroitin sulfate and that links the cytoskeleton to the interstitial matrix. Regulates exosome biogenesis in concert with SDCBP and PDCD6IP. Able to induce its own expression in dental mesenchymal cells and also in the neighboring dental epithelial cells via an MSX1-mediated pathway. This Homo sapiens (Human) protein is Syndecan-1.